Consider the following 145-residue polypeptide: Deoxyuridine 5'-triphosphate nucleotidohydrolase (145 aa).

It belongs to the dUTPase family. It depends on Mg(2+) as a cofactor.

The enzyme catalyses dUTP + H2O = dUMP + diphosphate + H(+). This enzyme is involved in nucleotide metabolism: it produces dUMP, the immediate precursor of thymidine nucleotides and it decreases the intracellular concentration of dUTP so that uracil cannot be incorporated into DNA. The polypeptide is Deoxyuridine 5'-triphosphate nucleotidohydrolase (DUT) (Fowlpox virus (strain NVSL) (FPV)).